Here is a 449-residue protein sequence, read N- to C-terminus: MSAASLKVTSTARPGSRLAVEVAIPAERSQASYEAAISQLSRSVNLPGFRKGKVPRSVLVQQLGGLRIRATALENLVDAIWRDTIKQETIEALGQPEVDGGYEALLESFEPGKPLSITFEADVAPTPTLKTTKGLKAEAESVSFDAAKVDEMLEQSRRQLATVVPVEGRKAAQGDIAVVGFKGTYSDDGSEIEGGSSESMDVDLEHGRMIPGFIEGVVGMTVGDSKTVACNFPEDYPKEDARGRKASFEIELKDLKTRELPDLDDDFAKQASEQETLAELRTDLEKRLKDDAERRTTSNRRDALLAALVEQLEVELPETLVQQEVRNLVEQTAAQFSQQGMDVKSLFTPDLVRNLMETSRPEAEERLRRSLALSALAEAESLKIEDPEIDAKVKEVTAQLSGERDIDPNRLRQAVIEDLLQEKLLGWLEENSTVTEKAPDKDKPSVTDA.

One can recognise a PPIase FKBP-type domain in the interval 174 to 261 (GDIAVVGFKG…LKDLKTRELP (88 aa)). Positions 430–449 (ENSTVTEKAPDKDKPSVTDA) are disordered. Residues 437–449 (KAPDKDKPSVTDA) are compositionally biased toward basic and acidic residues.

This sequence belongs to the FKBP-type PPIase family. Tig subfamily.

It localises to the cytoplasm. It carries out the reaction [protein]-peptidylproline (omega=180) = [protein]-peptidylproline (omega=0). Involved in protein export. Acts as a chaperone by maintaining the newly synthesized protein in an open conformation. Functions as a peptidyl-prolyl cis-trans isomerase. The protein is Trigger factor of Synechococcus sp. (strain CC9311).